Here is a 421-residue protein sequence, read N- to C-terminus: MRWILFIGALIGSSICGQEKFFGDQVLRINVRNGDEISKLSQLVNSNNLKLNFWKSPSSFNRPVDVLVPSVSLQAFKSFLRSQGLEYAVTIEDLQALLDNEDDEMQHNEGQERSSNNFNYGAYHSLEAIYHEMDNIAADFPDLARRVKIGHSFENRPMYVLKFSTGKGVRRPAVWLNAGIHSREWISQATAIWTARKIVSDYQRDPAITSILEKMDIFLLPVANPDGYVYTQTQNRLWRKTRSRNPGSSCIGADPNRNWNASFAGKGASDNPCSEVYHGPHANSEVEVKSVVDFIQKHGNFKGFIDLHSYSQLLMYPYGYSVKKAPDAEELDKVARLAAKALASVSGTEYQVGPTCTTVYPASGSSIDWAYDNGIKFAFTFELRDTGTYGFLLPANQIIPTAEETWLGLKTIMEHVRDNLY.

An N-terminal signal peptide occupies residues 1–16 (MRWILFIGALIGSSIC). Residues 17–113 (GQEKFFGDQV…EMQHNEGQER (97 aa)) constitute a propeptide, activation peptide. Residues Pro-69, Val-71, Asn-119, Tyr-123, His-124, Ser-125, Glu-127, and Phe-163 each coordinate a protein. One can recognise a Peptidase M14 domain in the interval 122–416 (AYHSLEAIYH…LGLKTIMEHV (295 aa)). Positions 181 and 184 each coordinate Zn(2+). The a protein site is built by Arg-196, Lys-197, and Ser-248. Cys-250 and Cys-273 are oxidised to a cystine. The N-linked (GlcNAc...) asparagine glycan is linked to Asn-260. Residue Asp-270 participates in a protein binding. His-308 contributes to the Zn(2+) binding site. The Proton donor/acceptor role is filled by Glu-382.

It belongs to the peptidase M14 family. In terms of assembly, monomer. Interacts with LXN. Zn(2+) is required as a cofactor. In terms of tissue distribution, fetal expression in the adrenal gland, brain, heart, intestine, kidney, liver and lung. Except for fetal brain that shows no imprinting, expression was found preferentially from the maternal allele.

Its subcellular location is the secreted. Its activity is regulated as follows. Inhibited by interaction with the metallocarboxypeptidase inhibitor (MCPI) from N.versicolor that binds to the catalytic zinc ion. Also inhibited by interaction with the S.magnifica carboxypeptidase inhibitor SmCI that penetrates the active site groove and inhibits activity by emulating a C-terminal substrate. Additionally inhibited by a carboxypeptidase inhibitor from H.medicinalis (leech) and R.bursa (tick). In terms of biological role, metalloprotease that cleaves hydrophobic C-terminal residues with a preference for -Phe, -Leu, -Ile, -Met, -Tyr and -Val. May function in peptide hormone and/or neuropeptide catabolism. In Homo sapiens (Human), this protein is Carboxypeptidase A4 (CPA4).